The following is a 142-amino-acid chain: Ribonuclease VapC25 (142 aa).

The 137-residue stretch at 3-139 (LIDVNVLLAA…ARFASVRHIR (137 aa)) folds into the PINc domain. Residues D5 and D108 each contribute to the Mg(2+) site.

It belongs to the PINc/VapC protein family. The cofactor is Mg(2+).

Its function is as follows. Toxic component of a type II toxin-antitoxin (TA) system. An RNase. Upon expression in M.smegmatis inhibits colony formation. Its toxic effect is neutralized by coexpression with cognate antitoxin VapB25. The chain is Ribonuclease VapC25 from Mycobacterium tuberculosis (strain ATCC 25618 / H37Rv).